We begin with the raw amino-acid sequence, 335 residues long: MKNLILAIESSCDDSSIAIIDKNTLECKFHKKISQELEHSIYGGVVPELAARLHSEALPKILKQSKKYFKNLCAIAVTNEPGLSVSLLGGISMAKTLASALNLPLIPINHLKGHIYSLFLEEKISLDRGILLVSGGHTMVLYLKDDANLELLASTNDDSFGESFDKVAKMMNLGYPGGVIIENLAKNAKLKNISFNTPLKHSKELAFSFSGLKNAVRLEILKHENLNEDTKAEIAYAFENTACDHIMDKLEKIFNLYKFKNFGVVGGASANLNLRSRLQNLCQKYNANLKLAPLKFCSDNALMIARAAVDAYEKKEFVSIEEDILSPKNKNFSRI.

Fe cation contacts are provided by His110 and His114. Residues 132 to 136 (LVSGG), Asp165, Gly178, and Asn271 contribute to the substrate site. Asp299 contacts Fe cation.

This sequence belongs to the KAE1 / TsaD family. The cofactor is Fe(2+).

The protein resides in the cytoplasm. It catalyses the reaction L-threonylcarbamoyladenylate + adenosine(37) in tRNA = N(6)-L-threonylcarbamoyladenosine(37) in tRNA + AMP + H(+). Its function is as follows. Required for the formation of a threonylcarbamoyl group on adenosine at position 37 (t(6)A37) in tRNAs that read codons beginning with adenine. Is involved in the transfer of the threonylcarbamoyl moiety of threonylcarbamoyl-AMP (TC-AMP) to the N6 group of A37, together with TsaE and TsaB. TsaD likely plays a direct catalytic role in this reaction. The sequence is that of tRNA N6-adenosine threonylcarbamoyltransferase from Campylobacter jejuni subsp. doylei (strain ATCC BAA-1458 / RM4099 / 269.97).